The primary structure comprises 205 residues: Transcription termination/antitermination protein NusG (205 aa).

In terms of domain architecture, KOW spans 154–178 (GDHIMVLSGPFKDFEGDVIEVSPER).

This sequence belongs to the NusG family.

Functionally, participates in transcription elongation, termination and antitermination. This Synechocystis sp. (strain ATCC 27184 / PCC 6803 / Kazusa) protein is Transcription termination/antitermination protein NusG.